The following is a 450-amino-acid chain: UDP-N-acetylglucosamine--peptide N-acetylglucosaminyltransferase stabilizing protein GtfB (450 aa).

Belongs to the GtfB family. Forms a heterotetramer with 2 subunits each of GtfA and GtfB. Part of the accessory SecA2/SecY2 protein translocation apparatus required to export cell wall protein GspB.

The protein localises to the cell membrane. Its pathway is protein modification; protein glycosylation. Its function is as follows. Required for polymorphic O-glycosylation of GspB, a serine-rich repeat cell wall protein encoded upstream in the same operon. A substrate-binding protein that is part of the accessory SecA2/SecY2 system specifically required to export GspB. The GtfA-GtfB complex adds GlcNAc from UDP-GlcNAc to GspB, attaching the first sugar residue. Upon coexpression in E.coli with GtfA glycosylates GspB constructs. Binds the GspB protein substrate; alone this subunit only recognizes partially glycosylated GspB, but is constrained by GtfA to also recognize unglycosylated protein. The enzyme probably modifies its tertiary conformation by opening and closing its intersubunit interfaces to accomodate the increasingly glycosylated substrate. The sequence is that of UDP-N-acetylglucosamine--peptide N-acetylglucosaminyltransferase stabilizing protein GtfB from Streptococcus gordonii.